The primary structure comprises 103 residues: c-Myc-binding protein (103 aa).

It belongs to the AMY1 family. As to quaternary structure, binds via its C-terminal region to the N-terminal region of MYC. Associates with AKAP1/S-AKAP84. Interacts with MYCBPAP. Interacts with CFAP91. In terms of tissue distribution, highly expressed in heart, placenta, pancreas, skeletal muscle and kidney. Also present at low levels in lung.

It localises to the cytoplasm. The protein resides in the nucleus. Its subcellular location is the mitochondrion. In terms of biological role, may control the transcriptional activity of MYC. Stimulates the activation of E box-dependent transcription by MYC. This chain is c-Myc-binding protein, found in Homo sapiens (Human).